Reading from the N-terminus, the 279-residue chain is tRNA-cytidine(32) 2-sulfurtransferase (279 aa).

Residues 46-51 carry the PP-loop motif motif; sequence SGGKDS. Cysteine 121, cysteine 124, and cysteine 212 together coordinate [4Fe-4S] cluster.

It belongs to the TtcA family. In terms of assembly, homodimer. Mg(2+) is required as a cofactor. [4Fe-4S] cluster serves as cofactor.

It is found in the cytoplasm. The catalysed reaction is cytidine(32) in tRNA + S-sulfanyl-L-cysteinyl-[cysteine desulfurase] + AH2 + ATP = 2-thiocytidine(32) in tRNA + L-cysteinyl-[cysteine desulfurase] + A + AMP + diphosphate + H(+). Its pathway is tRNA modification. In terms of biological role, catalyzes the ATP-dependent 2-thiolation of cytidine in position 32 of tRNA, to form 2-thiocytidine (s(2)C32). The sulfur atoms are provided by the cysteine/cysteine desulfurase (IscS) system. The sequence is that of tRNA-cytidine(32) 2-sulfurtransferase from Marinomonas sp. (strain MWYL1).